Here is a 189-residue protein sequence, read N- to C-terminus: Peptidyl-tRNA hydrolase (189 aa).

Y15 is a binding site for tRNA. H20 serves as the catalytic Proton acceptor. 3 residues coordinate tRNA: Y65, N67, and N113.

The protein belongs to the PTH family. In terms of assembly, monomer.

It is found in the cytoplasm. The catalysed reaction is an N-acyl-L-alpha-aminoacyl-tRNA + H2O = an N-acyl-L-amino acid + a tRNA + H(+). Functionally, hydrolyzes ribosome-free peptidyl-tRNAs (with 1 or more amino acids incorporated), which drop off the ribosome during protein synthesis, or as a result of ribosome stalling. Its function is as follows. Catalyzes the release of premature peptidyl moieties from peptidyl-tRNA molecules trapped in stalled 50S ribosomal subunits, and thus maintains levels of free tRNAs and 50S ribosomes. The polypeptide is Peptidyl-tRNA hydrolase (Caldicellulosiruptor saccharolyticus (strain ATCC 43494 / DSM 8903 / Tp8T 6331)).